The primary structure comprises 147 residues: MTKQEFKAITKELFFFNKKRLMLWIAILIFVIAFAMIIVFVPFFNFNDKIKSLFDKLKHINWQDPTALFGLVFSVLGYLITALSIPLKVFELMLMLRFRLMLAKLIKDGILDPKAFIDDIRHSYLSRRKQRKLEEEIEYLKRIKSDY.

2 consecutive transmembrane segments (helical) span residues 21 to 41 (LMLW…IVFV) and 67 to 87 (ALFG…SIPL).

The protein localises to the cell membrane. This is an uncharacterized protein from Ureaplasma parvum serovar 3 (strain ATCC 700970).